The sequence spans 264 residues: Thymidylate synthase (264 aa).

R21 contributes to the dUMP binding site. A (6R)-5,10-methylene-5,6,7,8-tetrahydrofolate-binding site is contributed by H51. 126-127 (RR) provides a ligand contact to dUMP. C146 serves as the catalytic Nucleophile. DUMP-binding positions include 166–169 (RSGD), N177, and 207–209 (HLY). D169 is a binding site for (6R)-5,10-methylene-5,6,7,8-tetrahydrofolate. A263 serves as a coordination point for (6R)-5,10-methylene-5,6,7,8-tetrahydrofolate.

This sequence belongs to the thymidylate synthase family. Bacterial-type ThyA subfamily. As to quaternary structure, homodimer.

It is found in the cytoplasm. The enzyme catalyses dUMP + (6R)-5,10-methylene-5,6,7,8-tetrahydrofolate = 7,8-dihydrofolate + dTMP. Its pathway is pyrimidine metabolism; dTTP biosynthesis. In terms of biological role, catalyzes the reductive methylation of 2'-deoxyuridine-5'-monophosphate (dUMP) to 2'-deoxythymidine-5'-monophosphate (dTMP) while utilizing 5,10-methylenetetrahydrofolate (mTHF) as the methyl donor and reductant in the reaction, yielding dihydrofolate (DHF) as a by-product. This enzymatic reaction provides an intracellular de novo source of dTMP, an essential precursor for DNA biosynthesis. The protein is Thymidylate synthase of Xanthomonas oryzae pv. oryzae (strain MAFF 311018).